The chain runs to 230 residues: Phosphoribosylformylglycinamidine synthase subunit PurQ (230 aa).

The Glutamine amidotransferase type-1 domain maps to 2–230 (KIAVTKFLGT…KGMIDYAKRI (229 aa)). Catalysis depends on Cys-85, which acts as the Nucleophile. Residues His-202 and Glu-204 contribute to the active site.

In terms of assembly, part of the FGAM synthase complex composed of 1 PurL, 1 PurQ and 2 PurS subunits.

The protein localises to the cytoplasm. The enzyme catalyses N(2)-formyl-N(1)-(5-phospho-beta-D-ribosyl)glycinamide + L-glutamine + ATP + H2O = 2-formamido-N(1)-(5-O-phospho-beta-D-ribosyl)acetamidine + L-glutamate + ADP + phosphate + H(+). It catalyses the reaction L-glutamine + H2O = L-glutamate + NH4(+). It functions in the pathway purine metabolism; IMP biosynthesis via de novo pathway; 5-amino-1-(5-phospho-D-ribosyl)imidazole from N(2)-formyl-N(1)-(5-phospho-D-ribosyl)glycinamide: step 1/2. In terms of biological role, part of the phosphoribosylformylglycinamidine synthase complex involved in the purines biosynthetic pathway. Catalyzes the ATP-dependent conversion of formylglycinamide ribonucleotide (FGAR) and glutamine to yield formylglycinamidine ribonucleotide (FGAM) and glutamate. The FGAM synthase complex is composed of three subunits. PurQ produces an ammonia molecule by converting glutamine to glutamate. PurL transfers the ammonia molecule to FGAR to form FGAM in an ATP-dependent manner. PurS interacts with PurQ and PurL and is thought to assist in the transfer of the ammonia molecule from PurQ to PurL. In Methanocaldococcus jannaschii (strain ATCC 43067 / DSM 2661 / JAL-1 / JCM 10045 / NBRC 100440) (Methanococcus jannaschii), this protein is Phosphoribosylformylglycinamidine synthase subunit PurQ.